A 330-amino-acid chain; its full sequence is Membrane progestin receptor gamma (330 aa).

Residues 1–51 lie on the Cytoplasmic side of the membrane; the sequence is MLSLKLPRLFRIDQVPQVFHEQGILFGYRHPQSSATACILSLFQMTNETLN. Residues 52 to 72 form a helical membrane-spanning segment; sequence IWTHLLPFWFFVWRFMTALYV. The Extracellular segment spans residues 73–81; it reads TDIQNDSYS. The helical transmembrane segment at 82-101 threads the bilayer; it reads WPMLVYMCTSCVYPLASSCA. At 102-113 the chain is on the cytoplasmic side; it reads HTFSSMSKNARH. A helical transmembrane segment spans residues 114–134; that stretch reads ICYFLDYGAVNLFSLGSAIAY. The Extracellular segment spans residues 135 to 141; the sequence is SAYTFPD. The helical transmembrane segment at 142–162 threads the bilayer; that stretch reads ALVCSTFHECYVALAVLNTIL. At 163–186 the chain is on the cytoplasmic side; it reads STGLSCYSRFLELQKPRLCKLLRV. The helical transmembrane segment at 187-207 threads the bilayer; that stretch reads LAFAYPYTWDSLPIFYRLFLF. At 208–253 the chain is on the extracellular side; sequence PGESSRNEAMLYHQKHMGMTLLASFFYSAHLPERLAPGRFDYIGHS. The chain crosses the membrane as a helical span at residues 254-274; the sequence is HQLFHVCVILATHLQMEAILL. Residues 275-294 lie on the Cytoplasmic side of the membrane; sequence DKTLRREWLLATSRPFSFPQ. A helical transmembrane segment spans residues 295–315; it reads IAAAMLLCIIFSLSNIIYFSA. The Extracellular portion of the chain corresponds to 316 to 330; it reads ALYRIPEPELHEKET.

Belongs to the ADIPOR family.

It is found in the cell membrane. In terms of biological role, plasma membrane progesterone (P4) receptor coupled to G proteins. Seems to act through a G(i) mediated pathway. May be involved in oocyte maturation. The chain is Membrane progestin receptor gamma from Mus musculus (Mouse).